Here is a 247-residue protein sequence, read N- to C-terminus: tRNA pseudouridine synthase A 1 (247 aa).

Aspartate 53 (nucleophile) is an active-site residue. Tyrosine 111 serves as a coordination point for substrate.

The protein belongs to the tRNA pseudouridine synthase TruA family. Homodimer.

It catalyses the reaction uridine(38/39/40) in tRNA = pseudouridine(38/39/40) in tRNA. In terms of biological role, formation of pseudouridine at positions 38, 39 and 40 in the anticodon stem and loop of transfer RNAs. The chain is tRNA pseudouridine synthase A 1 from Bacillus cereus (strain ZK / E33L).